Consider the following 1726-residue polypeptide: Protein Shroom2 (1726 aa).

A PDZ domain is found at 79 to 159 (AGGCYSYWRG…ILKMIVKRRN (81 aa)). 4 disordered regions span residues 294-373 (DNTK…RSDS), 425-451 (RTVA…LSPY), 657-676 (FSQL…DYSW), and 697-785 (EGRN…STYR). Residues 318-328 (VLQSTSINETS) show a composition bias toward polar residues. The span at 329-338 (KIQRTEDNTE) shows a compositional bias: basic and acidic residues. Residues 657–667 (FSQLDHSEKGS) are compositionally biased toward basic and acidic residues. Polar residues-rich tracts occupy residues 746–755 (SKSTAALTES) and 769–785 (LESM…STYR). Residues 788 to 877 (LQEAQARVLR…SEPEKINEVG (90 aa)) enclose the ASD1 domain. Disordered regions lie at residues 913-968 (PKVP…DKVT), 1007-1080 (LDAD…QCGA), 1092-1120 (KWKP…GTLP), 1166-1240 (FKKR…KNPS), 1269-1299 (SSKS…DKPP), and 1471-1499 (AQQR…VPSA). Residues 917-926 (PKVVSSSQSE) show a composition bias toward low complexity. Over residues 936-948 (DYAKSSEGQESKR) the composition is skewed to basic and acidic residues. Polar residues-rich tracts occupy residues 1054 to 1070 (NSNS…SPTR) and 1104 to 1119 (ETSN…SGTL). The segment covering 1191-1205 (SSSSLATSSESLLTA) has biased composition (low complexity). Positions 1209-1235 (RAQSYSPSSQDTFPPQSLQKQSPSTYP) are enriched in polar residues. An ASD2 domain is found at 1427–1721 (EELVREIVDK…QLKCLTDSLP (295 aa)).

The protein belongs to the shroom family. As to quaternary structure, interacts with F-actin.

The protein localises to the apical cell membrane. It is found in the cell junction. Its subcellular location is the tight junction. The protein resides in the cytoplasm. It localises to the cytoskeleton. Its function is as follows. May be involved in endothelial cell morphology changes during cell spreading. Required for eye pigmentation. In the retinal pigment epithelium, regulates the biogenesis of melanosomes and promotes their association with the apical cell surface by inducing gamma-tubulin redistribution. This is Protein Shroom2 (shroom2) from Xenopus tropicalis (Western clawed frog).